Consider the following 82-residue polypeptide: NAD(P)H-quinone oxidoreductase subunit O (82 aa).

Belongs to the complex I NdhO subunit family. In terms of assembly, NDH-1 can be composed of about 15 different subunits; different subcomplexes with different compositions have been identified which probably have different functions.

It is found in the cellular thylakoid membrane. It carries out the reaction a plastoquinone + NADH + (n+1) H(+)(in) = a plastoquinol + NAD(+) + n H(+)(out). It catalyses the reaction a plastoquinone + NADPH + (n+1) H(+)(in) = a plastoquinol + NADP(+) + n H(+)(out). In terms of biological role, NDH-1 shuttles electrons from an unknown electron donor, via FMN and iron-sulfur (Fe-S) centers, to quinones in the respiratory and/or the photosynthetic chain. The immediate electron acceptor for the enzyme in this species is believed to be plastoquinone. Couples the redox reaction to proton translocation, and thus conserves the redox energy in a proton gradient. Cyanobacterial NDH-1 also plays a role in inorganic carbon-concentration. The chain is NAD(P)H-quinone oxidoreductase subunit O from Prochlorococcus marinus (strain MIT 9211).